A 479-amino-acid polypeptide reads, in one-letter code: Protein kinase 2 (479 aa).

The disordered stretch occupies residues 1–136 (MGKGQSKIKN…NGNDDEDEGP (136 aa)). Low complexity-rich tracts occupy residues 52-65 (AQQQ…TTAA) and 79-96 (IPAP…TPTI). Over residues 102–115 (NTDNNNINGASNEA) the composition is skewed to polar residues. A Protein kinase domain is found at 153 to 407 (FELLNVIGKG…GGEVKQHPWF (255 aa)). ATP is bound by residues 159-167 (IGKGSFGKV) and lysine 182. Aspartate 276 (proton acceptor) is an active-site residue. A Phosphothreonine; by autocatalysis modification is found at threonine 309. The region spanning 408–479 (KNIDWEKLDR…TYVADSILKD (72 aa)) is the AGC-kinase C-terminal domain. Threonine 470 is subject to Phosphothreonine.

This sequence belongs to the protein kinase superfamily. AGC Ser/Thr protein kinase family. S6 kinase subfamily. Post-translationally, seems to be myristoylated.

It is found in the cytoplasm. It localises to the cell membrane. It catalyses the reaction L-seryl-[protein] + ATP = O-phospho-L-seryl-[protein] + ADP + H(+). The catalysed reaction is L-threonyl-[protein] + ATP = O-phospho-L-threonyl-[protein] + ADP + H(+). Functionally, required for morphogenesis during multicellular development. Phosphorylates talB, gefN, gefS, PI4P 5-kinase and gacQ. In Dictyostelium discoideum (Social amoeba), this protein is Protein kinase 2 (pkgB).